The chain runs to 161 residues: Peripheral myelin protein 22 (161 aa).

Residue Met-1 is a topological domain, cytoplasmic. A helical membrane pass occupies residues 2–31 (LLLLLGILFLHIAVLVLLFVSTIVSQWLVG). Residues 32–64 (NGHTTDLWQNCTTSALGAVQHCYSSSVSEWLQS) lie on the Extracellular side of the membrane. A glycan (N-linked (GlcNAc...) asparagine) is linked at Asn-41. A helical transmembrane segment spans residues 65–91 (VQATMILSVIFSVLALFLFFCQLFTLT). Residues 92–95 (KGGR) are Cytoplasmic-facing. Residues 96-119 (FYITGFFQILAGLCVMSAAAIYTV) form a helical membrane-spanning segment. The Extracellular segment spans residues 120-133 (RHSEWHVNTDYSYG). A helical transmembrane segment spans residues 134 to 156 (FAYILAWVAFPLALLSGIIYVIL). Residues 157–160 (RKRE) lie on the Cytoplasmic side of the membrane.

This sequence belongs to the PMP-22/EMP/MP20 family. Ubiquitinated by the DCX(DCAF13) E3 ubiquitin ligase complex, leading to its degradation. In terms of tissue distribution, schwann cells of the peripheral nervous system. Expressed at growth arrest of mammalian fibroblasts.

It localises to the cell membrane. In terms of biological role, might be involved in growth regulation, and in myelinization in the peripheral nervous system. This Mus musculus (Mouse) protein is Peripheral myelin protein 22 (Pmp22).